Consider the following 1485-residue polypeptide: Chromosome partition protein MukB (1485 aa).

34-41 (GGNGAGKS) is an ATP binding site. 2 coiled-coil regions span residues 337-480 (LNLV…QAYQ) and 509-605 (QHLA…PVWL). Residues 666–783 (PSGAEDARLI…EVPLFGRAAR (118 aa)) form a flexible hinge region. Coiled coils occupy residues 835-915 (EAEI…IQQH) and 977-1116 (GMLT…AKAG).

The protein belongs to the SMC family. MukB subfamily. Homodimerization via its hinge domain. Binds to DNA via its C-terminal region. Interacts, and probably forms a ternary complex, with MukE and MukF via its C-terminal region. The complex formation is stimulated by calcium or magnesium. Interacts with tubulin-related protein FtsZ.

Its subcellular location is the cytoplasm. It localises to the nucleoid. Its function is as follows. Plays a central role in chromosome condensation, segregation and cell cycle progression. Functions as a homodimer, which is essential for chromosome partition. Involved in negative DNA supercoiling in vivo, and by this means organize and compact chromosomes. May achieve or facilitate chromosome segregation by condensation DNA from both sides of a centrally located replisome during cell division. This is Chromosome partition protein MukB from Yersinia pseudotuberculosis serotype IB (strain PB1/+).